A 541-amino-acid polypeptide reads, in one-letter code: Protein ST7 homolog (541 aa).

Residues 15 to 35 (FYVALTGTSSLISGLILIFEW) form a helical membrane-spanning segment. The disordered stretch occupies residues 62 to 116 (DAQSDSSNGSGSSTSSGSSSSSNGGGGGGGGGAGGGGPGAGGGTNSTTTTGTQMP). Positions 67–83 (SSNGSGSSTSSGSSSSS) are enriched in low complexity. Residues 84–105 (NGGGGGGGGGAGGGGPGAGGGT) are compositionally biased toward gly residues. Residues 476–496 (LPFFILFTAGLCSFTALLALL) form a helical membrane-spanning segment.

Belongs to the ST7 family.

Its subcellular location is the membrane. This chain is Protein ST7 homolog, found in Drosophila pseudoobscura pseudoobscura (Fruit fly).